A 120-amino-acid chain; its full sequence is uncharacterized protein (120 aa).

This is an uncharacterized protein from Mycobacterium tuberculosis (strain CDC 1551 / Oshkosh).